A 21-amino-acid chain; its full sequence is DYE-linked aldehyde dehydrogenase, gamma chain (21 aa).

In terms of assembly, heterotetramer composed of an alpha, a beta and two gamma chains. [2Fe-2S] cluster is required as a cofactor.

Active with aldehydes and formate esters as substrates. In Amycolatopsis methanolica, this protein is DYE-linked aldehyde dehydrogenase, gamma chain.